Here is a 232-residue protein sequence, read N- to C-terminus: Orotate phosphoribosyltransferase (232 aa).

Residues R107, K108, K111, H113, and 133–141 (EDLTTAGGS) each bind 5-phospho-alpha-D-ribose 1-diphosphate. T137 contributes to the orotate binding site.

This sequence belongs to the purine/pyrimidine phosphoribosyltransferase family. PyrE subfamily. Homodimer. Requires Mg(2+) as cofactor.

The catalysed reaction is orotidine 5'-phosphate + diphosphate = orotate + 5-phospho-alpha-D-ribose 1-diphosphate. Its pathway is pyrimidine metabolism; UMP biosynthesis via de novo pathway; UMP from orotate: step 1/2. In terms of biological role, catalyzes the transfer of a ribosyl phosphate group from 5-phosphoribose 1-diphosphate to orotate, leading to the formation of orotidine monophosphate (OMP). The protein is Orotate phosphoribosyltransferase of Agrobacterium fabrum (strain C58 / ATCC 33970) (Agrobacterium tumefaciens (strain C58)).